Consider the following 119-residue polypeptide: Small ribosomal subunit protein bS6 (119 aa).

A disordered region spans residues 95 to 119; that stretch reads AVTEPSPLAKGNEKREDRKESEDAE. Positions 105 to 119 are enriched in basic and acidic residues; that stretch reads GNEKREDRKESEDAE.

This sequence belongs to the bacterial ribosomal protein bS6 family.

Binds together with bS18 to 16S ribosomal RNA. This is Small ribosomal subunit protein bS6 from Halorhodospira halophila (strain DSM 244 / SL1) (Ectothiorhodospira halophila (strain DSM 244 / SL1)).